Consider the following 453-residue polypeptide: UDP-glucosyltransferase avaP (453 aa).

This sequence belongs to the UDP-glycosyltransferase family.

The protein operates within secondary metabolite biosynthesis. UDP-glucosyltransferase; part of the cluster that mediates the biosynthesis of a highly modified cyclo-arginine-tryptophan dipeptide (cRW). The first step of the pathway is perfornmed by the arginine-containing cyclodipeptide synthase (RCPDS) avaA that acts as the scaffold-generating enzyme and is responsible for formation of the cyclo-Arg-Trp (cRW) diketopiperazine. AvaB then acts as a multifunctional flavoenzyme that is responsible for generating the cyclo-Arg-formylkynurenine DKP, which can be deformylated by avaC. AvaB then further catalyzes an additional N-oxidation followed by cyclization and dehydration. The next step is an N-acetylation of the guanidine group catalyzed by the arginine N-acetyltransferase avaD. The roles of the additional enzymes identified within the ava cluster still have to be determined. The chain is UDP-glucosyltransferase avaP from Aspergillus versicolor.